We begin with the raw amino-acid sequence, 159 residues long: MSITGQPHVYKKDTIIRLKPLSLNSNNRSYVFSSSKGNIQNIINHLNNLNEIVGRSLLGIWKINSYFGLSKDPSESKSKNPSVFNTAKNIFKSRGVDYSSQLKEVKSLLEAQNTRIKNLENAIQSLDNKIEPEPLTKEEVKELKESINSIKEGLKNIIG.

The protein belongs to the caulimoviridae ORF II family.

In terms of biological role, this protein is involved in virus transmission. In Cauliflower mosaic virus (strain CM-1841) (CaMV), this protein is Aphid transmission protein.